The sequence spans 471 residues: Ribulose bisphosphate carboxylase large chain (471 aa).

K5 is modified (N6,N6,N6-trimethyllysine). Substrate-binding residues include N114 and T164. Residue K166 is the Proton acceptor of the active site. A substrate-binding site is contributed by K168. Residues K192, D194, and E195 each coordinate Mg(2+). N6-carboxylysine is present on K192. The active-site Proton acceptor is the H285. Substrate contacts are provided by R286, H318, and S370.

This sequence belongs to the RuBisCO large chain family. Type I subfamily. Heterohexadecamer of 8 large chains and 8 small chains; disulfide-linked. The disulfide link is formed within the large subunit homodimers. Mg(2+) serves as cofactor. In terms of processing, the disulfide bond which can form in the large chain dimeric partners within the hexadecamer appears to be associated with oxidative stress and protein turnover.

The protein resides in the plastid. The protein localises to the chloroplast. It carries out the reaction 2 (2R)-3-phosphoglycerate + 2 H(+) = D-ribulose 1,5-bisphosphate + CO2 + H2O. The enzyme catalyses D-ribulose 1,5-bisphosphate + O2 = 2-phosphoglycolate + (2R)-3-phosphoglycerate + 2 H(+). Functionally, ruBisCO catalyzes two reactions: the carboxylation of D-ribulose 1,5-bisphosphate, the primary event in carbon dioxide fixation, as well as the oxidative fragmentation of the pentose substrate in the photorespiration process. Both reactions occur simultaneously and in competition at the same active site. The chain is Ribulose bisphosphate carboxylase large chain from Deppea grandiflora.